Consider the following 285-residue polypeptide: Alginate lyase (285 aa).

A signal peptide spans 1–20; it reads MIKSNLVISSLAIVSSMSYA.

The protein belongs to the polysaccharide lyase 6 family.

The catalysed reaction is Eliminative cleavage of alginate to give oligosaccharides with 4-deoxy-alpha-L-erythro-hex-4-enuronosyl groups at their non-reducing ends and beta-D-mannuronate at their reducing end.. The sequence is that of Alginate lyase (alxM) from Photobacterium sp. (strain ATCC 43367).